A 193-amino-acid polypeptide reads, in one-letter code: ATP-dependent Clp protease proteolytic subunit (193 aa).

Serine 98 (nucleophile) is an active-site residue. Residue histidine 123 is part of the active site.

Belongs to the peptidase S14 family. In terms of assembly, fourteen ClpP subunits assemble into 2 heptameric rings which stack back to back to give a disk-like structure with a central cavity, resembling the structure of eukaryotic proteasomes.

The protein localises to the cytoplasm. The enzyme catalyses Hydrolysis of proteins to small peptides in the presence of ATP and magnesium. alpha-casein is the usual test substrate. In the absence of ATP, only oligopeptides shorter than five residues are hydrolyzed (such as succinyl-Leu-Tyr-|-NHMec, and Leu-Tyr-Leu-|-Tyr-Trp, in which cleavage of the -Tyr-|-Leu- and -Tyr-|-Trp bonds also occurs).. Cleaves peptides in various proteins in a process that requires ATP hydrolysis. Has a chymotrypsin-like activity. Plays a major role in the degradation of misfolded proteins. This chain is ATP-dependent Clp protease proteolytic subunit, found in Lachnospira eligens (strain ATCC 27750 / DSM 3376 / VPI C15-48 / C15-B4) (Eubacterium eligens).